Reading from the N-terminus, the 646-residue chain is Threonine--tRNA ligase (646 aa).

Residues methionine 1–threonine 63 enclose the TGS domain. Residues aspartate 247–proline 544 are catalytic. Positions 344, 395, and 521 each coordinate Zn(2+).

The protein belongs to the class-II aminoacyl-tRNA synthetase family. Homodimer. The cofactor is Zn(2+).

Its subcellular location is the cytoplasm. The catalysed reaction is tRNA(Thr) + L-threonine + ATP = L-threonyl-tRNA(Thr) + AMP + diphosphate + H(+). Its function is as follows. Catalyzes the attachment of threonine to tRNA(Thr) in a two-step reaction: L-threonine is first activated by ATP to form Thr-AMP and then transferred to the acceptor end of tRNA(Thr). Also edits incorrectly charged L-seryl-tRNA(Thr). The protein is Threonine--tRNA ligase of Cereibacter sphaeroides (strain ATCC 17029 / ATH 2.4.9) (Rhodobacter sphaeroides).